The primary structure comprises 228 residues: Thymidine kinase (228 aa).

Residue 23–30 (GNIGCGKS) participates in ATP binding. Residue E50 is the Proton acceptor of the active site. Residues Y68, Q79, and F109 each coordinate substrate. R157 provides a ligand contact to ATP.

It belongs to the DCK/DGK family.

It catalyses the reaction thymidine + ATP = dTMP + ADP + H(+). This is Thymidine kinase (TK) from Ictaluridae (bullhead catfishes).